We begin with the raw amino-acid sequence, 229 residues long: Potassium/proton antiporter CemA (229 aa).

The next 4 membrane-spanning stretches (helical) occupy residues 7 to 27 (FTSL…SLSF), 114 to 134 (IICF…LVIL), 145 to 165 (LSDT…IGFH), and 189 to 209 (ILSS…KFWV).

This sequence belongs to the CemA family.

It is found in the plastid. The protein localises to the chloroplast inner membrane. It catalyses the reaction K(+)(in) + H(+)(out) = K(+)(out) + H(+)(in). Functionally, contributes to K(+)/H(+) antiport activity by supporting proton efflux to control proton extrusion and homeostasis in chloroplasts in a light-dependent manner to modulate photosynthesis. Prevents excessive induction of non-photochemical quenching (NPQ) under continuous-light conditions. Indirectly promotes efficient inorganic carbon uptake into chloroplasts. This Daucus carota (Wild carrot) protein is Potassium/proton antiporter CemA.